A 551-amino-acid polypeptide reads, in one-letter code: Glucose-6-phosphate isomerase (551 aa).

The active-site Proton donor is E349. Residues H378 and K480 contribute to the active site.

The protein belongs to the GPI family.

The protein localises to the cytoplasm. The catalysed reaction is alpha-D-glucose 6-phosphate = beta-D-fructose 6-phosphate. It functions in the pathway carbohydrate biosynthesis; gluconeogenesis. Its pathway is carbohydrate degradation; glycolysis; D-glyceraldehyde 3-phosphate and glycerone phosphate from D-glucose: step 2/4. Catalyzes the reversible isomerization of glucose-6-phosphate to fructose-6-phosphate. The chain is Glucose-6-phosphate isomerase from Parasynechococcus marenigrum (strain WH8102).